A 546-amino-acid chain; its full sequence is Glutamyl-tRNA(Gln) amidotransferase subunit A, chloroplastic/mitochondrial (546 aa).

Residues 21-52 form a disordered region; sequence KRRRFHSSTPLFLSQPQTLASTDPPSSPPQSQ. Residues 27-43 are compositionally biased toward polar residues; the sequence is SSTPLFLSQPQTLASTD. Catalysis depends on charge relay system residues lysine 123 and serine 198. The active-site Acyl-ester intermediate is the serine 222.

It belongs to the amidase family. GatA subfamily. In terms of assembly, subunit of the heterotrimeric GatCAB amidotransferase (AdT) complex, composed of A, B and C subunits.

It localises to the mitochondrion. The protein localises to the plastid. The protein resides in the chloroplast stroma. The catalysed reaction is L-glutamyl-tRNA(Gln) + L-glutamine + ATP + H2O = L-glutaminyl-tRNA(Gln) + L-glutamate + ADP + phosphate + H(+). In terms of biological role, allows the formation of correctly charged Gln-tRNA(Gln) through the transamidation of misacylated Glu-tRNA(Gln) in chloroplasts and mitochondria. The reaction takes place in the presence of glutamine and ATP through an activated gamma-phospho-Glu-tRNA(Gln). The chain is Glutamyl-tRNA(Gln) amidotransferase subunit A, chloroplastic/mitochondrial from Vitis vinifera (Grape).